We begin with the raw amino-acid sequence, 259 residues long: Ras-related protein Rab-34 (259 aa).

Position 1 is an N-acetylmethionine (M1). S62, V63, G64, K65, T66, D78, Y81, and T84 together coordinate GTP. Position 66 (T66) interacts with Mg(2+). Positions 71 to 89 (RFCKDTFDKNYKATIGVDF) match the Switch 1 motif. 2 residues coordinate Mg(2+): T84 and D107. The Switch 2 signature appears at 108–127 (TAGQERFKCIASTYYRGAQA). 4 residues coordinate GTP: G110, K167, D169, and S198. Residues S241 and S244 each carry the phosphoserine modification. Residues C257 and C258 are each lipidated (S-geranylgeranyl cysteine).

The protein belongs to the small GTPase superfamily. Rab family. Interacts with RILP. The GTP-bound form interacts with REP15. Mg(2+) serves as cofactor.

Its subcellular location is the cytoplasm. It is found in the golgi apparatus. It localises to the cytoplasmic vesicle. The protein resides in the phagosome. The protein localises to the phagosome membrane. Its subcellular location is the cell projection. It is found in the cilium. It localises to the cytoskeleton. The protein resides in the microtubule organizing center. The protein localises to the centrosome. Its subcellular location is the centriole. The catalysed reaction is GTP + H2O = GDP + phosphate + H(+). Its activity is regulated as follows. Regulated by guanine nucleotide exchange factors (GEFs) which promote the exchange of bound GDP for free GTP. Regulated by GTPase activating proteins (GAPs) which increase the GTP hydrolysis activity. Inhibited by GDP dissociation inhibitors (GDIs). The small GTPases Rab are key regulators of intracellular membrane trafficking, from the formation of transport vesicles to their fusion with membranes. Rabs cycle between an inactive GDP-bound form and an active GTP-bound form that is able to recruit to membranes different sets of downstream effectors directly responsible for vesicle formation, movement, tethering and fusion. RAB34 transports protein involved in the redistribution of lysosomes to the peri-Golgi region. Plays a role in the maturation of phagosomes that engulf pathogens, such as S.aureus and M.tuberculosis. Plays a role in the fusion of phagosomes with lysosomes. Required for the early steps of intracellular ciliogenesis, the cilium assembly pathway initiated by trafficking and docking of ciliary vesicles to the centrioles in the cytoplasm, followed by axoneme formation in the cytoplasm. After axoneme elongation, the centrioles migrate close to the cell surface so that ciliary vesicles can fuse with the plasma membrane to expose cilia to the extracellular space. It seems dispensable for ciliogenesis via the extracellular pathway where cilium assembly begins after migration and docking of the centriole to the plasma membrane. Also acts as a positive regulator of hedgehog signaling and regulates ciliary function. This is Ras-related protein Rab-34 (RAB34) from Sus scrofa (Pig).